The sequence spans 182 residues: UPF0690 protein C1orf52 (182 aa).

2 disordered regions span residues M1 to T67 and W100 to K182. Over residues S23–E32 the composition is skewed to acidic residues. A compositionally biased stretch (basic and acidic residues) spans N50 to F63. T67 carries the post-translational modification Phosphothreonine. Position 132 is a phosphotyrosine (Y132). Over residues E151–K162 the composition is skewed to acidic residues. Phosphoserine is present on S158. The span at V172–K182 shows a compositional bias: basic and acidic residues.

It belongs to the UPF0690 family. As to expression, expressed in all tissues tested including heart, placenta, liver, skeletal muscle, kidney and pancreas. Weak expression in brain and lung.

This Homo sapiens (Human) protein is UPF0690 protein C1orf52 (C1orf52).